Consider the following 857-residue polypeptide: MLQALMGKIFGTTNDRELKRYRQIVNKINNLESKYKALSDEALKSAFNEIKESVLSGGKSLDSVLVDSFAITREASTRVLNMRHFDVQLIGGIVLHEGKIAEMKTGEGKTLVATLPIVLNAISGKGVHLVTVNDYLASRDGNEMRPLYEFLGFSVGVILENMHDPVVKREVYNADITYGTNNEFGFDYLRDNMSYSRENMVQRGHNFVIVDEVDSILIDEARTPLIISGPTNRTLRDFKDANDIALKLLKDEHFSVDEKDKTVLLTEEGITRAEELFKVENLYSPENASLSHILDQALKANYLFEKDVDYVVNNGEVVIVDEFTGRLSEGRRFSEGLHQALEAKESVEIKEETQTLADITFQNYFRMYNKLAGMTGTAQTEASEFAQIYSLDVISIPTNIPILRKDLNDLIYKTEKEKFEAVIATIKKLSATGQPVLIGTASIEKSEILHEVLKKEKIAHTVLNAKNHAQEGEIIKNAGAKGAVTIATNMAGRGVDIKVNDEVKALGGLYIVGTERHENRRIDNQLRGRSGRQGDNGTTQFYLSLEDSLLRIFGSDKIKSIMERLGVEDGEYIESKMVTRAVEKAQKKVENMHYEGRKHIVEYDDVANEQRKIVYKFRNQLLDPEFNISMKINEIRAEYVAHLFANVSIFNGGVKEDFNLEKLFKLIHEEINLELNPADFASYEYEELLEVLTQKIKSSYDEKMSVLNDSICSEIERELYLKELDSAWREHLYAMDNMKTGIRLRAYNQKDPLVEYKKESFNLFTELVEDIKFNTIKTLQIIQFRVEDPEEEARRVAEKLDIQRKMNEASIQFNHYQSEMENESKKISRNDLCPCGSGKKYKLCCGKSGPKKGVFAS.

ATP is bound by residues Q88, 106-110 (GEGKT), and D496. Residues C833, C835, C844, and C845 each coordinate Zn(2+).

This sequence belongs to the SecA family. Monomer and homodimer. Part of the essential Sec protein translocation apparatus which comprises SecA, SecYEG and auxiliary proteins SecDF-YajC and YidC. Zn(2+) serves as cofactor.

It localises to the cell inner membrane. Its subcellular location is the cytoplasm. The enzyme catalyses ATP + H2O + cellular proteinSide 1 = ADP + phosphate + cellular proteinSide 2.. Its function is as follows. Part of the Sec protein translocase complex. Interacts with the SecYEG preprotein conducting channel. Has a central role in coupling the hydrolysis of ATP to the transfer of proteins into and across the cell membrane, serving as an ATP-driven molecular motor driving the stepwise translocation of polypeptide chains across the membrane. This is Protein translocase subunit SecA from Sulfurimonas denitrificans (strain ATCC 33889 / DSM 1251) (Thiomicrospira denitrificans (strain ATCC 33889 / DSM 1251)).